An 82-amino-acid chain; its full sequence is RNA-binding protein Hfq (82 aa).

One can recognise a Sm domain in the interval 11–71 (DTFLNHVRKT…ISTIMPGAPI (61 aa)).

It belongs to the Hfq family. Homohexamer.

RNA chaperone that binds small regulatory RNA (sRNAs) and mRNAs to facilitate mRNA translational regulation in response to envelope stress, environmental stress and changes in metabolite concentrations. Also binds with high specificity to tRNAs. The polypeptide is RNA-binding protein Hfq (Rhodopseudomonas palustris (strain HaA2)).